Reading from the N-terminus, the 476-residue chain is Protein transport protein Sec61 subunit alpha (476 aa).

Over 2 to 33 (GIKFLEFIKPFCAVLPEIQKPERKIQFREKVL) the chain is Cytoplasmic. The helical transmembrane segment at 34-53 (WTAITLFIFLVCCQIPLFGI) threads the bilayer. Residues 54–76 (MSSDSADPFYWMRVILASNRGTL) lie on the Lumenal side of the membrane. A helical membrane pass occupies residues 77–96 (MELGISPIVTSGLIMQLLAG). The Cytoplasmic segment spans residues 97-117 (AKIIEVGDTPKDRALFNGAQK). The helical transmembrane segment at 118–138 (LFGMIITIGQAIVYVMTGMYG) threads the bilayer. Over 139–144 (DPSEMG) the chain is Lumenal. A helical membrane pass occupies residues 145–165 (AGICLLIIIQLFVAGLIVLLL). Over 166–172 (DELLQKG) the chain is Cytoplasmic. Residues 173–193 (YGLGSGISLFIATNICETIVW) traverse the membrane as a helical segment. Topologically, residues 194 to 240 (KAFSPTTVNTGRGTEFEGAIIALFHLLATRTDKVRALREAFYRQNLP) are lumenal. Residues 241–261 (NILNLIATVFVFAVVIYFQGF) form a helical membrane-spanning segment. The Cytoplasmic segment spans residues 262–288 (RVDLPIKSARYRGQYNTYPIKLFYTSN). A helical membrane pass occupies residues 289 to 309 (IPIILQSALVSNLYVISQMLS). Residues 310-354 (TRFSGNFLVNLLGTWSDATSGGPARAYPVAGLCYYLSPPESFGSV) lie on the Lumenal side of the membrane. The chain crosses the membrane as a helical span at residues 355–375 (LDDPVHAAIYIVFMLGSCAFF). Over 376–420 (SKTWIEVSGSSAKDVAKQLKEQQMVMRGHRETSMVHELNRYIPTA) the chain is Cytoplasmic. Residues 421–441 (AAFGGLCIGGLSVMADFLGAI) traverse the membrane as a helical segment. Residues 442–445 (GSGT) lie on the Lumenal side of the membrane. A helical membrane pass occupies residues 446–462 (GILLAVTIIYQYFEIFV). Over 463–476 (KEQSEMGSMGALLF) the chain is Cytoplasmic.

It belongs to the SecY/SEC61-alpha family. In terms of assembly, the SEC61 channel-forming translocon complex consists of channel-forming core components SEC61A1, SEC61B and SEC61G and different auxiliary components such as SEC62 and SEC63. The SEC61 channel associates with the multi-pass translocon (MPT) complex.

The protein resides in the endoplasmic reticulum membrane. In terms of biological role, component of SEC61 channel-forming translocon complex that mediates transport of signal peptide-containing precursor polypeptides across the endoplasmic reticulum (ER). Forms a ribosome receptor and a gated pore in the ER membrane, both functions required for cotranslational translocation of nascent polypeptides. May cooperate with auxiliary protein SEC62, SEC63 and HSPA5/BiP to enable post-translational transport of small presecretory proteins. The SEC61 channel is also involved in ER membrane insertion of transmembrane proteins: it mediates membrane insertion of the first few transmembrane segments of proteins, while insertion of subsequent transmembrane regions of multi-pass membrane proteins is mediated by the multi-pass translocon (MPT) complex. This Notothenia angustata (Rockcod) protein is Protein transport protein Sec61 subunit alpha (sec61a).